The sequence spans 200 residues: Dephospho-CoA kinase (200 aa).

In terms of domain architecture, DPCK spans alanine 6–lysine 200. Alanine 14–threonine 19 serves as a coordination point for ATP.

The protein belongs to the CoaE family.

Its subcellular location is the cytoplasm. It catalyses the reaction 3'-dephospho-CoA + ATP = ADP + CoA + H(+). The protein operates within cofactor biosynthesis; coenzyme A biosynthesis; CoA from (R)-pantothenate: step 5/5. Functionally, catalyzes the phosphorylation of the 3'-hydroxyl group of dephosphocoenzyme A to form coenzyme A. In Sulfurimonas denitrificans (strain ATCC 33889 / DSM 1251) (Thiomicrospira denitrificans (strain ATCC 33889 / DSM 1251)), this protein is Dephospho-CoA kinase.